The sequence spans 253 residues: Indole-3-glycerol phosphate synthase (253 aa).

The protein belongs to the TrpC family.

The enzyme catalyses 1-(2-carboxyphenylamino)-1-deoxy-D-ribulose 5-phosphate + H(+) = (1S,2R)-1-C-(indol-3-yl)glycerol 3-phosphate + CO2 + H2O. It functions in the pathway amino-acid biosynthesis; L-tryptophan biosynthesis; L-tryptophan from chorismate: step 4/5. In Bacillus cereus (strain B4264), this protein is Indole-3-glycerol phosphate synthase.